The sequence spans 132 residues: Small ribosomal subunit protein uS8 (132 aa).

Belongs to the universal ribosomal protein uS8 family. As to quaternary structure, part of the 30S ribosomal subunit. Contacts proteins S5 and S12.

In terms of biological role, one of the primary rRNA binding proteins, it binds directly to 16S rRNA central domain where it helps coordinate assembly of the platform of the 30S subunit. The chain is Small ribosomal subunit protein uS8 from Nocardia farcinica (strain IFM 10152).